Reading from the N-terminus, the 107-residue chain is Iron-binding protein IscA (107 aa).

The Fe cation site is built by cysteine 35, cysteine 99, and cysteine 101.

This sequence belongs to the HesB/IscA family. In terms of assembly, homodimer; may form tetramers and higher multimers. The cofactor is Fe cation.

Functionally, is able to transfer iron-sulfur clusters to apo-ferredoxin. Multiple cycles of [2Fe2S] cluster formation and transfer are observed, suggesting that IscA acts catalytically. Recruits intracellular free iron so as to provide iron for the assembly of transient iron-sulfur cluster in IscU in the presence of IscS, L-cysteine and the thioredoxin reductase system TrxA/TrxB. The chain is Iron-binding protein IscA from Salmonella agona (strain SL483).